The sequence spans 167 residues: NAD(P)H-quinone oxidoreductase subunit I, chloroplastic (167 aa).

2 4Fe-4S ferredoxin-type domains span residues 55–84 (GRIH…VDWK) and 95–124 (LNYS…MTEE). [4Fe-4S] cluster contacts are provided by Cys-64, Cys-67, Cys-70, Cys-74, Cys-104, Cys-107, Cys-110, and Cys-114.

Belongs to the complex I 23 kDa subunit family. In terms of assembly, NDH is composed of at least 16 different subunits, 5 of which are encoded in the nucleus. It depends on [4Fe-4S] cluster as a cofactor.

It localises to the plastid. The protein resides in the chloroplast thylakoid membrane. The enzyme catalyses a plastoquinone + NADH + (n+1) H(+)(in) = a plastoquinol + NAD(+) + n H(+)(out). It carries out the reaction a plastoquinone + NADPH + (n+1) H(+)(in) = a plastoquinol + NADP(+) + n H(+)(out). In terms of biological role, NDH shuttles electrons from NAD(P)H:plastoquinone, via FMN and iron-sulfur (Fe-S) centers, to quinones in the photosynthetic chain and possibly in a chloroplast respiratory chain. The immediate electron acceptor for the enzyme in this species is believed to be plastoquinone. Couples the redox reaction to proton translocation, and thus conserves the redox energy in a proton gradient. The sequence is that of NAD(P)H-quinone oxidoreductase subunit I, chloroplastic from Vitis vinifera (Grape).